The following is a 100-amino-acid chain: uncharacterized protein (100 aa).

An Isoglutamyl lysine isopeptide (Lys-Gln) (interchain with Q-Cter in protein Pup) cross-link involves residue lysine 98.

This is an uncharacterized protein from Mycobacterium tuberculosis (strain CDC 1551 / Oshkosh).